We begin with the raw amino-acid sequence, 160 residues long: Large ribosomal subunit protein uL15 (160 aa).

The span at 1–13 (MKLNEIRDNEGAR) shows a compositional bias: basic and acidic residues. The segment at 1-41 (MKLNEIRDNEGARKSRIRVGRGIGSGKGKTGGRGVKGQKSR) is disordered. Over residues 21–35 (RGIGSGKGKTGGRGV) the composition is skewed to gly residues.

It belongs to the universal ribosomal protein uL15 family. As to quaternary structure, part of the 50S ribosomal subunit.

Functionally, binds to the 23S rRNA. The protein is Large ribosomal subunit protein uL15 of Parvibaculum lavamentivorans (strain DS-1 / DSM 13023 / NCIMB 13966).